The chain runs to 153 residues: Formate hydrogenlyase regulatory protein HycA (153 aa).

In terms of biological role, regulatory protein for the formate hydrogenlyase system. Could act by directly interacting with FhlA or by preventing the binding of FhlA to the upstream activatory sequence. The chain is Formate hydrogenlyase regulatory protein HycA (hycA) from Escherichia coli O157:H7.